A 602-amino-acid chain; its full sequence is UvrABC system protein C (602 aa).

The GIY-YIG domain occupies 15–92 (DLPGSYQMKD…IQKYQPYYNI (78 aa)). The region spanning 197–232 (GKAKASLTAKMERAAKNLQFERAAEIRDQLHYIEQT) is the UVR domain.

The protein belongs to the UvrC family. In terms of assembly, interacts with UvrB in an incision complex.

The protein resides in the cytoplasm. The UvrABC repair system catalyzes the recognition and processing of DNA lesions. UvrC both incises the 5' and 3' sides of the lesion. The N-terminal half is responsible for the 3' incision and the C-terminal half is responsible for the 5' incision. The polypeptide is UvrABC system protein C (Lacticaseibacillus paracasei (strain ATCC 334 / BCRC 17002 / CCUG 31169 / CIP 107868 / KCTC 3260 / NRRL B-441) (Lactobacillus paracasei)).